Reading from the N-terminus, the 380-residue chain is tRNA-specific 2-thiouridylase MnmA (380 aa).

ATP-binding positions include 26 to 33 (AMSGGVDS) and L52. Residue C120 is the Nucleophile of the active site. C120 and C217 are disulfide-bonded. Position 144 (G144) interacts with ATP. The tract at residues 166–168 (RDQ) is interaction with tRNA. Residue C217 is the Cysteine persulfide intermediate of the active site.

The protein belongs to the MnmA/TRMU family.

It is found in the cytoplasm. The catalysed reaction is S-sulfanyl-L-cysteinyl-[protein] + uridine(34) in tRNA + AH2 + ATP = 2-thiouridine(34) in tRNA + L-cysteinyl-[protein] + A + AMP + diphosphate + H(+). In terms of biological role, catalyzes the 2-thiolation of uridine at the wobble position (U34) of tRNA, leading to the formation of s(2)U34. This is tRNA-specific 2-thiouridylase MnmA from Roseobacter denitrificans (strain ATCC 33942 / OCh 114) (Erythrobacter sp. (strain OCh 114)).